Consider the following 402-residue polypeptide: Serine--glyoxylate aminotransferase (402 aa).

At Lys201 the chain carries N6-(pyridoxal phosphate)lysine.

It belongs to the class-V pyridoxal-phosphate-dependent aminotransferase family. It depends on pyridoxal 5'-phosphate as a cofactor.

The catalysed reaction is glyoxylate + L-serine = 3-hydroxypyruvate + glycine. The protein operates within one-carbon metabolism; formaldehyde assimilation via serine pathway. The polypeptide is Serine--glyoxylate aminotransferase (Methylorubrum extorquens (strain ATCC 14718 / DSM 1338 / JCM 2805 / NCIMB 9133 / AM1) (Methylobacterium extorquens)).